A 646-amino-acid polypeptide reads, in one-letter code: Cell surface glycoprotein MUC18 (646 aa).

Positions 1-23 (MGLPRLVCAFLLAACCCCPRVAG) are cleaved as a signal peptide. Ig-like V-type domains are found at residues 24–129 (VPGE…YRIQ) and 139–242 (PNIQ…REVT). Residues 24–559 (VPGEAEQPAP…RKLPEPESRG (536 aa)) lie on the Extracellular side of the membrane. Intrachain disulfides connect Cys48–Cys116, Cys161–Cys223, Cys272–Cys320, and Cys365–Cys407. Asn56 carries an N-linked (GlcNAc...) asparagine glycan. 3 Ig-like C2-type domains span residues 244-330 (PVFY…TMIS), 335-424 (PQEL…QLVN), and 430-510 (PPWM…KNTS). The segment at 278 to 299 (PPPHFSISKQNPSTREAEEETT) is disordered. Asn418, Asn449, Asn467, Asn508, Asn518, Asn527, and Asn544 each carry an N-linked (GlcNAc...) asparagine glycan. An intrachain disulfide couples Cys452 to Cys499. Positions 525-554 (DSNTTTGLSTSTASPHTRANSTSTERKLPE) are disordered. A compositionally biased stretch (polar residues) spans 533-547 (STSTASPHTRANSTS). A helical transmembrane segment spans residues 560 to 583 (VVIVAVIVCILVLAVLGAVLYFLY). The Cytoplasmic portion of the chain corresponds to 584–646 (KKGKLPCRRS…QGEKYIDLRH (63 aa)). A phosphoserine mark is found at Ser606, Ser614, and Ser628. Positions 620 to 646 (EMGLLQGSSGDKRAPGDQGEKYIDLRH) are disordered. The segment covering 629–646 (GDKRAPGDQGEKYIDLRH) has biased composition (basic and acidic residues).

Detected in endothelial cells in vascular tissue throughout the body. May appear at the surface of neural crest cells during their embryonic migration. Appears to be limited to vascular smooth muscle in normal adult tissues. Associated with tumor progression and the development of metastasis in human malignant melanoma. Expressed most strongly on metastatic lesions and advanced primary tumors and is only rarely detected in benign melanocytic nevi and thin primary melanomas with a low probability of metastasis.

The protein resides in the membrane. Functionally, plays a role in cell adhesion, and in cohesion of the endothelial monolayer at intercellular junctions in vascular tissue. Its expression may allow melanoma cells to interact with cellular elements of the vascular system, thereby enhancing hematogeneous tumor spread. Could be an adhesion molecule active in neural crest cells during embryonic development. Acts as a surface receptor that triggers tyrosine phosphorylation of FYN and PTK2/FAK1, and a transient increase in the intracellular calcium concentration. This is Cell surface glycoprotein MUC18 (MCAM) from Homo sapiens (Human).